The chain runs to 116 residues: Aspartate 1-decarboxylase (116 aa).

Catalysis depends on Ser-25, which acts as the Schiff-base intermediate with substrate; via pyruvic acid. Position 25 is a pyruvic acid (Ser) (Ser-25). Substrate is bound at residue Thr-57. Residue Tyr-58 is the Proton donor of the active site. 73-75 (GPA) contacts substrate.

Belongs to the PanD family. Heterooctamer of four alpha and four beta subunits. Pyruvate serves as cofactor. In terms of processing, is synthesized initially as an inactive proenzyme, which is activated by self-cleavage at a specific serine bond to produce a beta-subunit with a hydroxyl group at its C-terminus and an alpha-subunit with a pyruvoyl group at its N-terminus.

It localises to the cytoplasm. The enzyme catalyses L-aspartate + H(+) = beta-alanine + CO2. It participates in cofactor biosynthesis; (R)-pantothenate biosynthesis; beta-alanine from L-aspartate: step 1/1. Catalyzes the pyruvoyl-dependent decarboxylation of aspartate to produce beta-alanine. In Flavobacterium psychrophilum (strain ATCC 49511 / DSM 21280 / CIP 103535 / JIP02/86), this protein is Aspartate 1-decarboxylase.